The following is a 294-amino-acid chain: uncharacterized protein (294 aa).

This is an uncharacterized protein from Diadromus pulchellus idnoreovirus 1 (DpIRV-1).